The chain runs to 354 residues: Uroporphyrinogen decarboxylase (354 aa).

Residues 27–31, Asp-77, Tyr-154, Ser-209, and His-327 contribute to the substrate site; that span reads RQAGR.

It belongs to the uroporphyrinogen decarboxylase family. In terms of assembly, homodimer.

Its subcellular location is the cytoplasm. The enzyme catalyses uroporphyrinogen III + 4 H(+) = coproporphyrinogen III + 4 CO2. It functions in the pathway porphyrin-containing compound metabolism; protoporphyrin-IX biosynthesis; coproporphyrinogen-III from 5-aminolevulinate: step 4/4. Its function is as follows. Catalyzes the decarboxylation of four acetate groups of uroporphyrinogen-III to yield coproporphyrinogen-III. The protein is Uroporphyrinogen decarboxylase of Shewanella amazonensis (strain ATCC BAA-1098 / SB2B).